The primary structure comprises 141 residues: HTH-type transcriptional repressor NsrR (141 aa).

Residues 2-129 (QLTSFTDYGL…DQYTLADMVK (128 aa)) form the HTH rrf2-type domain. The H-T-H motif DNA-binding region spans 28-51 (ISEVTEVYGVSRNHMVKIINQLSR). Residues Cys-91, Cys-96, and Cys-102 each coordinate [2Fe-2S] cluster.

It depends on [2Fe-2S] cluster as a cofactor.

Nitric oxide-sensitive repressor of genes involved in protecting the cell against nitrosative stress. May require iron for activity. This Pectobacterium atrosepticum (strain SCRI 1043 / ATCC BAA-672) (Erwinia carotovora subsp. atroseptica) protein is HTH-type transcriptional repressor NsrR.